The following is a 394-amino-acid chain: Elongation factor Tu (394 aa).

The tr-type G domain maps to 10–204 (KPHVNIGTIG…AVDSYIPQPV (195 aa)). Residues 19-26 (GHVDHGKT) form a G1 region. Residue 19-26 (GHVDHGKT) coordinates GTP. Thr26 serves as a coordination point for Mg(2+). The G2 stretch occupies residues 60 to 64 (GITIS). The segment at 81 to 84 (DCPG) is G3. GTP-binding positions include 81–85 (DCPGH) and 136–139 (NKID). The interval 136-139 (NKID) is G4. The segment at 174–176 (SAL) is G5.

The protein belongs to the TRAFAC class translation factor GTPase superfamily. Classic translation factor GTPase family. EF-Tu/EF-1A subfamily. Monomer.

It is found in the cytoplasm. The enzyme catalyses GTP + H2O = GDP + phosphate + H(+). GTP hydrolase that promotes the GTP-dependent binding of aminoacyl-tRNA to the A-site of ribosomes during protein biosynthesis. The protein is Elongation factor Tu of Rickettsia rickettsii.